Here is a 303-residue protein sequence, read N- to C-terminus: Beta-lactamase L2 (303 aa).

The segment at residues 1–35 (MLARRRFLQFSGAAVASSLALPLLARAAGKTAASA) is a signal peptide (tat-type signal). The active-site Acyl-ester intermediate is Ser-83. A substrate-binding site is contributed by 247-249 (KTG).

The protein belongs to the class-A beta-lactamase family. In terms of processing, predicted to be exported by the Tat system. The position of the signal peptide cleavage has not been experimentally proven.

The catalysed reaction is a beta-lactam + H2O = a substituted beta-amino acid. This chain is Beta-lactamase L2, found in Stenotrophomonas maltophilia (Pseudomonas maltophilia).